The chain runs to 157 residues: 2-C-methyl-D-erythritol 2,4-cyclodiphosphate synthase (157 aa).

Residues Asp8 and His10 each contribute to the a divalent metal cation site. 4-CDP-2-C-methyl-D-erythritol 2-phosphate contacts are provided by residues 8 to 10 (DVH) and 34 to 35 (HS). His42 lines the a divalent metal cation pocket. Residues 56 to 58 (DIG), 61 to 65 (FPDTD), 100 to 106 (AQAPKMA), 132 to 135 (TTTE), Phe139, and Arg142 each bind 4-CDP-2-C-methyl-D-erythritol 2-phosphate.

The protein belongs to the IspF family. In terms of assembly, homotrimer. It depends on a divalent metal cation as a cofactor.

The catalysed reaction is 4-CDP-2-C-methyl-D-erythritol 2-phosphate = 2-C-methyl-D-erythritol 2,4-cyclic diphosphate + CMP. Its pathway is isoprenoid biosynthesis; isopentenyl diphosphate biosynthesis via DXP pathway; isopentenyl diphosphate from 1-deoxy-D-xylulose 5-phosphate: step 4/6. Involved in the biosynthesis of isopentenyl diphosphate (IPP) and dimethylallyl diphosphate (DMAPP), two major building blocks of isoprenoid compounds. Catalyzes the conversion of 4-diphosphocytidyl-2-C-methyl-D-erythritol 2-phosphate (CDP-ME2P) to 2-C-methyl-D-erythritol 2,4-cyclodiphosphate (ME-CPP) with a corresponding release of cytidine 5-monophosphate (CMP). The polypeptide is 2-C-methyl-D-erythritol 2,4-cyclodiphosphate synthase (Pseudomonas fluorescens (strain ATCC BAA-477 / NRRL B-23932 / Pf-5)).